The primary structure comprises 245 residues: MSEFTVYPAIDIRNGKCVRLIQGDYEKETIYGHSPLEMASRFAEEGASWIHLVDLDGAREGKKVNGGHVISIADKLDVKVQVGGGIRTEKDVYDYLSQGVERVILGSSAVSNTEFVKKMLKAYGGHIAIGLDARDGFVSTEGWLETSSVRAEELGRELANEGAEVFIFTDIATDGMLSGPNINSTVELARATGKQVIASGGVSSLADLEALASRASEGVSGAIVGKALYTNQFTVAEALERVAAK.

Asp-11 (proton acceptor) is an active-site residue. The Proton donor role is filled by Asp-132.

The protein belongs to the HisA/HisF family.

The protein resides in the cytoplasm. It catalyses the reaction 1-(5-phospho-beta-D-ribosyl)-5-[(5-phospho-beta-D-ribosylamino)methylideneamino]imidazole-4-carboxamide = 5-[(5-phospho-1-deoxy-D-ribulos-1-ylimino)methylamino]-1-(5-phospho-beta-D-ribosyl)imidazole-4-carboxamide. It functions in the pathway amino-acid biosynthesis; L-histidine biosynthesis; L-histidine from 5-phospho-alpha-D-ribose 1-diphosphate: step 4/9. The polypeptide is 1-(5-phosphoribosyl)-5-[(5-phosphoribosylamino)methylideneamino] imidazole-4-carboxamide isomerase (Bacillus licheniformis (strain ATCC 14580 / DSM 13 / JCM 2505 / CCUG 7422 / NBRC 12200 / NCIMB 9375 / NCTC 10341 / NRRL NRS-1264 / Gibson 46)).